The sequence spans 238 residues: Bacterial microcompartment shell protein PduB (238 aa).

BMC circularly permuted domains are found at residues 14-125 and 126-225; these read FVGA…VYNA and KAGH…LSQF. Cysteine 158 and cysteine 197 are joined by a disulfide.

Belongs to the EutL/PduB family. In terms of assembly, homotrimerizes to form a pseudohexamer with a central pore 7.5 Angstroms wide and 22 Angstroms long; the pore channel in the crystal binds up to 4 glycerol molecules. A disulfide bond forms in the pore, it is not clear if this is an artifact. The trimers pack into an array.

Its subcellular location is the bacterial microcompartment. It participates in polyol metabolism; 1,2-propanediol degradation. One of the major shell proteins of the bacterial microcompartment (BMC) dedicated to 1,2-propanediol (1,2-PD) degradation. Probably involved in a propanediol fermentation/reuterin formation pathway. This is Bacterial microcompartment shell protein PduB from Limosilactobacillus reuteri (strain DSM 20016) (Lactobacillus reuteri).